Consider the following 336-residue polypeptide: Serpentine receptor class gamma-9 (336 aa).

7 helical membrane-spanning segments follow: residues 30–50 (LLQA…LYVI), 64–84 (FVIY…DIFI), 111–131 (IYYP…IFLT), 152–172 (LSFI…NTII), 200–220 (FLFL…VIMF), 237–257 (LCLA…FEAL), and 271–291 (FLIQ…IMIF).

It belongs to the nematode receptor-like protein srg family.

It is found in the membrane. The chain is Serpentine receptor class gamma-9 (srg-9) from Caenorhabditis elegans.